A 259-amino-acid chain; its full sequence is GTP cyclohydrolase FolE2 (259 aa).

The protein belongs to the GTP cyclohydrolase IV family.

It carries out the reaction GTP + H2O = 7,8-dihydroneopterin 3'-triphosphate + formate + H(+). It participates in cofactor biosynthesis; 7,8-dihydroneopterin triphosphate biosynthesis; 7,8-dihydroneopterin triphosphate from GTP: step 1/1. Its function is as follows. Converts GTP to 7,8-dihydroneopterin triphosphate. This is GTP cyclohydrolase FolE2 from Thermosipho africanus (strain TCF52B).